The sequence spans 370 residues: UDP-N-acetylglucosamine--N-acetylmuramyl-(pentapeptide) pyrophosphoryl-undecaprenol N-acetylglucosamine transferase (370 aa).

Residues 15–17 (TGG), Asn-129, Arg-170, Ser-200, Ile-253, and Gln-298 each bind UDP-N-acetyl-alpha-D-glucosamine.

The protein belongs to the glycosyltransferase 28 family. MurG subfamily.

Its subcellular location is the cell inner membrane. It catalyses the reaction di-trans,octa-cis-undecaprenyl diphospho-N-acetyl-alpha-D-muramoyl-L-alanyl-D-glutamyl-meso-2,6-diaminopimeloyl-D-alanyl-D-alanine + UDP-N-acetyl-alpha-D-glucosamine = di-trans,octa-cis-undecaprenyl diphospho-[N-acetyl-alpha-D-glucosaminyl-(1-&gt;4)]-N-acetyl-alpha-D-muramoyl-L-alanyl-D-glutamyl-meso-2,6-diaminopimeloyl-D-alanyl-D-alanine + UDP + H(+). The protein operates within cell wall biogenesis; peptidoglycan biosynthesis. In terms of biological role, cell wall formation. Catalyzes the transfer of a GlcNAc subunit on undecaprenyl-pyrophosphoryl-MurNAc-pentapeptide (lipid intermediate I) to form undecaprenyl-pyrophosphoryl-MurNAc-(pentapeptide)GlcNAc (lipid intermediate II). This Salinibacter ruber (strain DSM 13855 / M31) protein is UDP-N-acetylglucosamine--N-acetylmuramyl-(pentapeptide) pyrophosphoryl-undecaprenol N-acetylglucosamine transferase.